Here is a 479-residue protein sequence, read N- to C-terminus: Proline--tRNA ligase (479 aa).

Belongs to the class-II aminoacyl-tRNA synthetase family. ProS type 3 subfamily. Homodimer.

It is found in the cytoplasm. It carries out the reaction tRNA(Pro) + L-proline + ATP = L-prolyl-tRNA(Pro) + AMP + diphosphate. Its function is as follows. Catalyzes the attachment of proline to tRNA(Pro) in a two-step reaction: proline is first activated by ATP to form Pro-AMP and then transferred to the acceptor end of tRNA(Pro). The chain is Proline--tRNA ligase from Lachnospira eligens (strain ATCC 27750 / DSM 3376 / VPI C15-48 / C15-B4) (Eubacterium eligens).